The sequence spans 870 residues: Importin subunit beta-1 (870 aa).

Alanine 2 carries the N-acetylalanine modification. 18 HEAT repeats span residues 4 to 33 (EVTQ…FQEQ), 35 to 67 (LAGF…KNAL), 87 to 126 (MSTK…ELPQ), 132 to 161 (LIVS…LCEE), 172 to 204 (VNKI…YMAL), 214 to 249 (DMER…IAST), 255 to 304 (AHYM…EFAG), 313 to 361 (FTKQ…RAVG), 365 to 395 (VPHV…GSIL), 403 to 440 (LMAI…IFEF), 456 to 492 (CQQI…EDIG), 498 to 535 (TPFF…EVVR), 542 to 588 (STMV…QVII), 596 to 637 (TKSK…AYAA), 642 to 679 (AKYM…CRAL), 684 to 722 (LPYC…ALAI), 730 to 776 (WRYS…FQGF), and 826 to 868 (SHVG…TRAI). Residues 23–103 (AEESLKQFQE…RAFLLKTLSA (81 aa)) enclose the Importin N-terminal domain.

This sequence belongs to the importin beta family. Importin beta-1 subfamily. As to quaternary structure, forms a complex with the importin subunits alpha IMPA1 or IMPA2, the nucleoporin NUP62 and the Ran-GTP-binding proteins RAN1, RAN2 or RAN3. As to expression, expressed in roots, cotyledons, leaves, stems, petals, stamen, stigma, siliques, embryos and guard cells.

The protein localises to the cytoplasm. It is found in the nucleus. Functionally, acts as a negative effector of drought tolerance. Involved in the regulation of stomatal closure and in the abscisic acid (ABA)-mediated pathway that lead to drought tolerance. Does not directly mediate nuclear import of ABI1 and ABI2 which are key regulators of the ABA signaling pathway. May be involved in nuclear translocation of other type 2C protein phosphatases that mediate ABA signaling. The sequence is that of Importin subunit beta-1 from Arabidopsis thaliana (Mouse-ear cress).